Reading from the N-terminus, the 370-residue chain is Phosphate-binding protein PstS 3 (370 aa).

An N-terminal signal peptide occupies residues 1 to 22; the sequence is MKLNRFGAAVGVLAAGALVLSA. Cys-23 carries N-palmitoyl cysteine lipidation. Cys-23 is lipidated: S-diacylglycerol cysteine. Residues 56-58, Ser-86, Asp-104, and 191-193 each bind phosphate; these read STA and SGT.

It belongs to the PstS family. In terms of assembly, the complex is composed of two ATP-binding proteins (PstB), two transmembrane proteins (PstC and PstA) and a solute-binding protein (PstS).

The protein localises to the cell membrane. Its function is as follows. Part of the ABC transporter complex PstSACB involved in phosphate import. The polypeptide is Phosphate-binding protein PstS 3 (pstS3) (Mycobacterium bovis (strain ATCC BAA-935 / AF2122/97)).